The sequence spans 60 residues: Large ribosomal subunit protein uL30 (60 aa).

The protein belongs to the universal ribosomal protein uL30 family. Part of the 50S ribosomal subunit.

The protein is Large ribosomal subunit protein uL30 of Polaromonas naphthalenivorans (strain CJ2).